The primary structure comprises 542 residues: Glucans biosynthesis protein G (542 aa).

Positions 1–34 (MVSLLRCPSSKPYSSLICSLTLGAVVALSGVAYA) are cleaved as a signal peptide.

Belongs to the OpgD/OpgG family.

The protein resides in the periplasm. It participates in glycan metabolism; osmoregulated periplasmic glucan (OPG) biosynthesis. Involved in the biosynthesis of osmoregulated periplasmic glucans (OPGs). The protein is Glucans biosynthesis protein G of Shewanella baltica (strain OS155 / ATCC BAA-1091).